The following is a 155-amino-acid chain: Aspartate carbamoyltransferase regulatory chain (155 aa).

Positions 112, 117, 138, and 141 each coordinate Zn(2+).

It belongs to the PyrI family. In terms of assembly, contains catalytic and regulatory chains. The cofactor is Zn(2+).

Its function is as follows. Involved in allosteric regulation of aspartate carbamoyltransferase. The sequence is that of Aspartate carbamoyltransferase regulatory chain from Methanocorpusculum labreanum (strain ATCC 43576 / DSM 4855 / Z).